The primary structure comprises 222 residues: Large ribosomal subunit protein bL20 (222 aa).

Belongs to the bacterial ribosomal protein bL20 family.

In terms of biological role, binds directly to 23S ribosomal RNA and is necessary for the in vitro assembly process of the 50S ribosomal subunit. It is not involved in the protein synthesizing functions of that subunit. The sequence is that of Large ribosomal subunit protein bL20 (rplT) from Paenarthrobacter aurescens (strain TC1).